The sequence spans 348 residues: MVLLAQGACCSNQWLAAVLLSLCSCLPAGQSVDFPWAAVDNMLVRKGDTAVLRCYLEDGASKGAWLNRSSIIFAGGDKWSVDPRVSISTLNKRDYSLQIQNVDVTDDGPYTCSVQTQHTPRTMQVHLTVQVPPKIYDISNDMTINEGTNVTLTCLATGKPEPAISWRHISPSAKPFENGQYLDIYGITRDQAGEYECSAENDVSFPDVKKVRVVVNFAPTIQEIKSGTVTPGRSGLIRCEGAGVPPPAFEWYKGEKRLFNGQQGIIIQNFSTRSILTVTNVTQEHFGNYTCVAANKLGTTNASLPLNPPSTAQYGITGSACDLFSCWSLALTLSSVISIFYLKNAILQ.

The N-terminal stretch at 1 to 31 is a signal peptide; that stretch reads MVLLAQGACCSNQWLAAVLLSLCSCLPAGQS. Ig-like C2-type domains follow at residues 32–128, 133–215, and 219–307; these read VDFP…VHLT, PKIY…RVVV, and PTIQ…LPLN. A disulfide bridge connects residues Cys-54 and Cys-112. 2 N-linked (GlcNAc...) asparagine glycosylation sites follow: Asn-67 and Asn-149. Disulfide bonds link Cys-154-Cys-197 and Cys-239-Cys-291. Tyr-181 is modified (phosphotyrosine). Asn-269, Asn-280, Asn-288, and Asn-301 each carry an N-linked (GlcNAc...) asparagine glycan. Gly-318 carries GPI-anchor amidated glycine lipidation. Residues 319–348 constitute a propeptide, removed in mature form; sequence SACDLFSCWSLALTLSSVISIFYLKNAILQ.

This sequence belongs to the immunoglobulin superfamily. IgLON family. Post-translationally, glycosylated. In terms of tissue distribution, highly expressed in brain.

It localises to the cell membrane. Its function is as follows. May be involved in cell-adhesion. May function as a trans-neural growth-promoting factor in regenerative axon sprouting in the mammalian brain. This chain is Neuronal growth regulator 1 (Negr1), found in Rattus norvegicus (Rat).